Reading from the N-terminus, the 553-residue chain is MKWCWGPVLLIAGATVLMEGLQAAQRACGQRGPGPPKPQEGNTVPGEWPWQASVRRQGAHICSGSLVADTWVLTAAHCFEKAAATELNSWSVVLGSLQREGLSPGAEEVGVAALQLPRAYNHYSQGSDLALLQLAHPTTHTPLCLPQPAHRFPFGASCWATGWDQDTSDAPGTLRNLRLRLISRPTCNCIYNQLHQRHLSNPARPGMLCGGPQPGVQGPCQGDSGGPVLCLEPDGHWVQAGIISFASSCAQEDAPVLLTNTAAHSSWLQARVQGAAFLAQSPETPEMSDEDSCVACGSLRTAGPQAGAPSPWPWEARLMHQGQLACGGALVSEEAVLTAAHCFIGRQAPEEWSVGLGTRPEEWGLKQLILHGAYTHPEGGYDMALLLLAQPVTLGASLRPLCLPYPDHHLPDGERGWVLGRARPGAGISSLQTVPVTLLGPRACSRLHAAPGGDGSPILPGMVCTSAVGELPSCEGLSGAPLVHEVRGTWFLAGLHSFGDACQGPARPAVFTALPAYEDWVSSLDWQVYFAEEPEPEAEPGSCLANISQPTSC.

An N-terminal signal peptide occupies residues 1-23; sequence MKWCWGPVLLIAGATVLMEGLQA. 2 consecutive Peptidase S1 domains span residues 24–273 and 294–526; these read AQRA…ARVQ and VACG…SLDW. Residues 27 to 46 are disordered; the sequence is ACGQRGPGPPKPQEGNTVPG. A disulfide bridge connects residues C62 and C78. Active-site charge relay system residues include H77 and D128. Intrachain disulfides connect C158–C230, C187–C209, C220–C249, and C326–C342. Catalysis depends on charge relay system residues S224, H341, and D382. 2 cysteine pairs are disulfide-bonded: C444–C464 and C474–C502. S478 serves as the catalytic Charge relay system.

It belongs to the peptidase S1 family. As to expression, predominantly detected in testis, liver, heart and ovary, as well as in several tumor cell lines.

The protein resides in the secreted. In vitro can degrade the fibrinogen alpha chain of as well as pro-urokinase-type plasminogen activator. The chain is Serine protease 53 (PRSS53) from Homo sapiens (Human).